A 186-amino-acid polypeptide reads, in one-letter code: 3-hydroxyanthranilate 3,4-dioxygenase (186 aa).

Arg44 contacts O2. The Fe cation site is built by His48, Glu54, and His96. Glu54 serves as a coordination point for substrate. The substrate site is built by Arg100 and Glu110. Positions 125, 130, 164, and 167 each coordinate a divalent metal cation.

The protein belongs to the 3-HAO family. Fe(2+) is required as a cofactor.

The protein localises to the cytoplasm. The catalysed reaction is 3-hydroxyanthranilate + O2 = (2Z,4Z)-2-amino-3-carboxymuconate 6-semialdehyde. The protein operates within cofactor biosynthesis; NAD(+) biosynthesis; quinolinate from L-kynurenine: step 3/3. In terms of biological role, catalyzes the oxidative ring opening of 3-hydroxyanthranilate to 2-amino-3-carboxymuconate semialdehyde, which spontaneously cyclizes to quinolinate. The polypeptide is 3-hydroxyanthranilate 3,4-dioxygenase (Chaetomium globosum (strain ATCC 6205 / CBS 148.51 / DSM 1962 / NBRC 6347 / NRRL 1970) (Soil fungus)).